Here is a 334-residue protein sequence, read N- to C-terminus: Delta(1)-pyrroline-2-carboxylate/Delta(1)-piperideine-2-carboxylate reductase (334 aa).

The active-site Charge relay system is the serine 44. Histidine 45 serves as the catalytic Proton donor. Position 49 (arginine 49) interacts with substrate. Position 117-121 (117-121) interacts with NADP(+); the sequence is HFSAL. Threonine 157 contributes to the substrate binding site. 175–177 serves as a coordination point for NADP(+); the sequence is DFA. 183-184 is a substrate binding site; the sequence is RG. The Charge relay system role is filled by glutamate 185. NADP(+)-binding positions include 226–227 and 301–307; these read HK and RLPSQRR.

This sequence belongs to the LDH2/MDH2 oxidoreductase family. In terms of assembly, homodimer.

The enzyme catalyses L-pipecolate + NADP(+) = Delta(1)-piperideine-2-carboxylate + NADPH + H(+). The catalysed reaction is L-proline + NADP(+) = 1-pyrroline-2-carboxylate + NADPH + H(+). It catalyses the reaction cis-4-hydroxy-L-proline + NADP(+) = Delta(1)-pyrroline-(4S)-hydroxy-2-carboxylate + NADPH + 2 H(+). Catalyzes the reduction of both Delta(1)-pyrroline-2-carboxylate (Pyr2C) and Delta(1)-piperideine-2-carboxylate (Pip2C) to L-proline and L-pipecolate, respectively, using NADPH as the electron donor. Cannot use NADH instead of NADPH. Is likely involved in a degradation pathway that converts trans-3-hydroxy-L-proline (t3LHyp) to L-proline, which would allow P.aeruginosa to grow on t3LHyp as a sole carbon source. Can also catalyze the reverse oxidation reactions, albeit at a much lower rate. Is also able to use Delta(1)-pyrroline-(4S)-hydroxy-2-carboxylate (Pyr4SH2C) and cis-4-hydroxy-L-proline (c4LHyp) as substrates, and might be involved in the metabolism of c4LHyp, a compound which is generated by the hydroxylation of free L-proline in bacteria. The polypeptide is Delta(1)-pyrroline-2-carboxylate/Delta(1)-piperideine-2-carboxylate reductase (Pseudomonas aeruginosa (strain ATCC 15692 / DSM 22644 / CIP 104116 / JCM 14847 / LMG 12228 / 1C / PRS 101 / PAO1)).